The primary structure comprises 423 residues: Serine--tRNA ligase (423 aa).

230-232 lines the L-serine pocket; the sequence is TSE. ATP is bound at residue 261–263; the sequence is RSE. Residue glutamate 284 participates in L-serine binding. 348-351 lines the ATP pocket; the sequence is EISS. Serine 384 provides a ligand contact to L-serine.

It belongs to the class-II aminoacyl-tRNA synthetase family. Type-1 seryl-tRNA synthetase subfamily. Homodimer. The tRNA molecule binds across the dimer.

It is found in the cytoplasm. It catalyses the reaction tRNA(Ser) + L-serine + ATP = L-seryl-tRNA(Ser) + AMP + diphosphate + H(+). It carries out the reaction tRNA(Sec) + L-serine + ATP = L-seryl-tRNA(Sec) + AMP + diphosphate + H(+). It participates in aminoacyl-tRNA biosynthesis; selenocysteinyl-tRNA(Sec) biosynthesis; L-seryl-tRNA(Sec) from L-serine and tRNA(Sec): step 1/1. Its function is as follows. Catalyzes the attachment of serine to tRNA(Ser). Is also able to aminoacylate tRNA(Sec) with serine, to form the misacylated tRNA L-seryl-tRNA(Sec), which will be further converted into selenocysteinyl-tRNA(Sec). This chain is Serine--tRNA ligase, found in Macrococcus caseolyticus (strain JCSC5402) (Macrococcoides caseolyticum).